Reading from the N-terminus, the 187-residue chain is MALEAWFMDDSNEDQRLPHHRNPKELVSLDYLAELGVLYWKLNPENYENDSELSKIREDRGYDYMDLLDLCPEKVSNYEEKLKNFFTEHIHKDEEIRYCLAGSGYFDVRDKDDRWIRIWMQPGDLIVLPAGIYHRFTLDASNYIKLMRLFVGEPVWTPYNRPQEEHPVRKKYIHGLTYKFGETVKAH.

The residue at position 2 (A2) is an N-acetylalanine. Residues H89, H91, E95, and H134 each contribute to the Fe(2+) site. Ni(2+) is bound by residues H89, H91, E95, and H134.

The protein belongs to the acireductone dioxygenase (ARD) family. It depends on Fe(2+) as a cofactor. Requires Ni(2+) as cofactor.

The protein localises to the cytoplasm. The protein resides in the nucleus. The enzyme catalyses 1,2-dihydroxy-5-(methylsulfanyl)pent-1-en-3-one + O2 = 4-methylsulfanyl-2-oxobutanoate + formate + 2 H(+). It catalyses the reaction 1,2-dihydroxy-5-(methylsulfanyl)pent-1-en-3-one + O2 = 3-(methylsulfanyl)propanoate + CO + formate + 2 H(+). It functions in the pathway amino-acid biosynthesis; L-methionine biosynthesis via salvage pathway; L-methionine from S-methyl-5-thio-alpha-D-ribose 1-phosphate: step 5/6. In terms of biological role, catalyzes 2 different reactions between oxygen and the acireductone 1,2-dihydroxy-3-keto-5-methylthiopentene (DHK-MTPene) depending upon the metal bound in the active site. Fe-containing acireductone dioxygenase (Fe-ARD) produces formate and 2-keto-4-methylthiobutyrate (KMTB), the alpha-ketoacid precursor of methionine in the methionine recycle pathway. Ni-containing acireductone dioxygenase (Ni-ARD) produces methylthiopropionate, carbon monoxide and formate, and does not lie on the methionine recycle pathway. The sequence is that of Acireductone dioxygenase 4 (ARD4) from Arabidopsis thaliana (Mouse-ear cress).